The primary structure comprises 819 residues: MSNIQNMSLEDIMGERFGRYSKYIIQERALPDIRDGLKPVQRRILYSMNKDGNTFEKGYRKSAKSVGNIMGNFHPHGDFSIYDAMVRMSQDWKNREILVEMHGNNGSMDGDPPAAMRYTEARLSEIAGYLLQDIEKNTVSFAWNFDDTEKEPTVLPAAFPNLLVNGSSGISAGYATDIPPHNLSEVIDAVVYMIDHPKASLEKLMEFLPGPDFPTGGIIQGADEIKKAYETGKGRVVVRSRTEIEELKGGKQQIIVTEIPYEVNKAVLVKKIDDVRVNNKVPGIVEVRDESDRTGLRIAIELKKEADSQTILNYLLKYTDLQVNYNFNMVAIDHFTPRQVGLQKILSSYISHRKDIIIERSKFDKAKAEKRLHIVEGLIRVLSILDEIIALIRSSDNKADAKENLKVSYDFSEEQAEAIVTLQLYRLTNTDIVTLQNEENDLRDLITTLSAIIGDEATMYNVMKRELREVKKKFANPRLSELQAESQIIEIDTASLIAEEETFVSVTRGGYLKRTSPRSFNASSLEEVGKRDDDELIFVKQAKTTEHLLLFTTLGNVIYRPIHELTDLRWKDIGEHLSQTISNFATEEEILYADIVTSFDQGLYVAVTQNGFIKRFDRKELSPWRTYKSKSTKYVKLKDDKDRVVTLSPVIMEDLLLVTKNGYALRFSSQEVPIQGLKSAGVKGINLKNDDSLASAFAVTSNSFFVLTQRGSLKRMAVDDIPQTSRANRGLLVLRELKTKPHRVFLAGGVQSDTSAEQFDLFTDIPEEETNQQMLEVISKTGQTYEIALETLSLSERTSNGSFISDTISDQEVLVARTR.

The 467-residue stretch at Leu30–Leu496 folds into the Topo IIA-type catalytic domain. The active-site O-(5'-phospho-DNA)-tyrosine intermediate is Tyr118.

Belongs to the type II topoisomerase GyrA/ParC subunit family. ParC type 2 subfamily. Heterotetramer composed of ParC and ParE.

Its subcellular location is the cell membrane. The catalysed reaction is ATP-dependent breakage, passage and rejoining of double-stranded DNA.. Topoisomerase IV is essential for chromosome segregation. It relaxes supercoiled DNA. Performs the decatenation events required during the replication of a circular DNA molecule. In Streptococcus pyogenes serotype M3 (strain SSI-1), this protein is DNA topoisomerase 4 subunit A.